The chain runs to 777 residues: MAKLSLSSIFFVFPLLLCFFSPSSSSSDGLESYIVHVQRSHKPSLFSSHNNWHVSLLRSLPSSPQPATLLYSYSRAVHGFSARLSPIQTAALRRHPSVISVIPDQAREIHTTHTPAFLGFSQNSGLWSNSNYGEDVIVGVLDTGIWPEHPSFSDSGLGPIPSTWKGECEIGPDFPASSCNRKLIGARAFYRGYLTQRNGTKKHAAKESRSPRDTEGHGTHTASTAAGSVVANASLYQYARGTATGMASKARIAAYKICWTGGCYDSDILAAMDQAVADGVHVISLSVGASGSAPEYHTDSIAIGAFGATRHGIVVSCSAGNSGPNPETATNIAPWILTVGASTVDREFAANAITGDGKVFTGTSLYAGESLPDSQLSLVYSGDCGSRLCYPGKLNSSLVEGKIVLCDRGGNARVEKGSAVKLAGGAGMILANTAESGEELTADSHLVPATMVGAKAGDQIRDYIKTSDSPTAKISFLGTLIGPSPPSPRVAAFSSRGPNHLTPVILKPDVIAPGVNILAGWTGMVGPTDLDIDPRRVQFNIISGTSMSCPHVSGLAALLRKAHPDWSPAAIKSALVTTAYDVENSGEPIEDLATGKSSNSFIHGAGHVDPNKALNPGLVYDIEVKEYVAFLCAVGYEFPGILVFLQDPTLYDACETSKLRTAGDLNYPSFSVVFASTGEVVKYKRVVKNVGSNVDAVYEVGVKSPANVEIDVSPSKLAFSKEKSVLEYEVTFKSVVLGGGVGSVPGHEFGSIEWTDGEHVVKSPVAVQWGQGSVQSF.

An N-terminal signal peptide occupies residues 1 to 25 (MAKLSLSSIFFVFPLLLCFFSPSSS). Residues 26-110 (SSDGLESYIV…VIPDQAREIH (85 aa)) constitute a propeptide, activation peptide. The 79-residue stretch at 32–110 (SYIVHVQRSH…VIPDQAREIH (79 aa)) folds into the Inhibitor I9 domain. The region spanning 115-614 (PAFLGFSQNS…AGHVDPNKAL (500 aa)) is the Peptidase S8 domain. D142 acts as the Charge relay system in catalysis. A glycan (N-linked (GlcNAc...) asparagine) is linked at N198. Residues 199-223 (GTKKHAAKESRSPRDTEGHGTHTAS) are disordered. Residues 205–218 (AKESRSPRDTEGHG) are compositionally biased toward basic and acidic residues. Residue H217 is the Charge relay system of the active site. N232 and N395 each carry an N-linked (GlcNAc...) asparagine glycan. Positions 376-461 (LSLVYSGDCG…VGAKAGDQIR (86 aa)) constitute a PA domain. Catalysis depends on S546, which acts as the Charge relay system.

The protein belongs to the peptidase S8 family.

Its subcellular location is the secreted. This chain is Subtilisin-like protease SBT1.4, found in Arabidopsis thaliana (Mouse-ear cress).